The following is a 492-amino-acid chain: Differentially expressed in FDCP 8 homolog (492 aa).

A compositionally biased stretch (gly residues) spans 38-51 (GLGGSGSTGSGSEA). The interval 38–62 (GLGGSGSTGSGSEAGGSEESGPQGA) is disordered. 2 consecutive Phorbol-ester/DAG-type zinc fingers follow at residues 161–214 (PHHG…KRVC) and 400–453 (DHIR…NMIC). Positions 468–492 (RMKSTEDDDDDDDGVATDDDVTAAE) are disordered. Residues 473-492 (EDDDDDDDGVATDDDVTAAE) show a composition bias toward acidic residues.

Belongs to the DEF8 family.

The chain is Differentially expressed in FDCP 8 homolog from Drosophila melanogaster (Fruit fly).